The primary structure comprises 443 residues: Xaa-Pro dipeptidase (443 aa).

Residues D246, D257, H339, E384, and E423 each coordinate Mn(2+).

It belongs to the peptidase M24B family. Bacterial-type prolidase subfamily. Mn(2+) is required as a cofactor.

The enzyme catalyses Xaa-L-Pro dipeptide + H2O = an L-alpha-amino acid + L-proline. Functionally, splits dipeptides with a prolyl residue in the C-terminal position. The polypeptide is Xaa-Pro dipeptidase (Pectobacterium atrosepticum (strain SCRI 1043 / ATCC BAA-672) (Erwinia carotovora subsp. atroseptica)).